Here is a 502-residue protein sequence, read N- to C-terminus: Medium/long-chain-fatty-acid--CoA ligase FadD17 (502 aa).

The protein belongs to the ATP-dependent AMP-binding enzyme family.

It carries out the reaction a medium-chain fatty acid + ATP + CoA = a medium-chain fatty acyl-CoA + AMP + diphosphate. It catalyses the reaction a long-chain fatty acid + ATP + CoA = a long-chain fatty acyl-CoA + AMP + diphosphate. It functions in the pathway lipid metabolism; fatty acid biosynthesis. Its function is as follows. Catalyzes the activation of medium/long-chain fatty acids as acyl-coenzyme A (acyl-CoA), which are then transferred to the multifunctional polyketide synthase (PKS) type III for further chain extension. The protein is Medium/long-chain-fatty-acid--CoA ligase FadD17 (fadD17) of Mycobacterium bovis (strain ATCC BAA-935 / AF2122/97).